We begin with the raw amino-acid sequence, 235 residues long: Large ribosomal subunit protein uL1 (235 aa).

This sequence belongs to the universal ribosomal protein uL1 family. In terms of assembly, part of the 50S ribosomal subunit.

Its function is as follows. Binds directly to 23S rRNA. The L1 stalk is quite mobile in the ribosome, and is involved in E site tRNA release. Protein L1 is also a translational repressor protein, it controls the translation of the L11 operon by binding to its mRNA. In Citrobacter koseri (strain ATCC BAA-895 / CDC 4225-83 / SGSC4696), this protein is Large ribosomal subunit protein uL1.